Here is a 509-residue protein sequence, read N- to C-terminus: Putative Rieske 2Fe-2S iron-sulfur protein YhfW (509 aa).

Residues 423–509 form the Rieske domain; that stretch reads KPDVQFEDIS…IKPLKQIDLD (87 aa). [2Fe-2S] cluster is bound by residues Cys-463, His-465, Cys-481, and His-484. An intrachain disulfide couples Cys-468 to Cys-483.

Belongs to the Rieske iron-sulfur protein family. It depends on [2Fe-2S] cluster as a cofactor.

The chain is Putative Rieske 2Fe-2S iron-sulfur protein YhfW (yhfW) from Bacillus subtilis (strain 168).